Reading from the N-terminus, the 367-residue chain is 4-hydroxy-3-methylbut-2-en-1-yl diphosphate synthase (flavodoxin) (367 aa).

[4Fe-4S] cluster is bound by residues Cys265, Cys268, Cys300, and Glu307.

Belongs to the IspG family. Requires [4Fe-4S] cluster as cofactor.

It carries out the reaction (2E)-4-hydroxy-3-methylbut-2-enyl diphosphate + oxidized [flavodoxin] + H2O + 2 H(+) = 2-C-methyl-D-erythritol 2,4-cyclic diphosphate + reduced [flavodoxin]. It participates in isoprenoid biosynthesis; isopentenyl diphosphate biosynthesis via DXP pathway; isopentenyl diphosphate from 1-deoxy-D-xylulose 5-phosphate: step 5/6. Functionally, converts 2C-methyl-D-erythritol 2,4-cyclodiphosphate (ME-2,4cPP) into 1-hydroxy-2-methyl-2-(E)-butenyl 4-diphosphate. The polypeptide is 4-hydroxy-3-methylbut-2-en-1-yl diphosphate synthase (flavodoxin) (Bacillus cereus (strain ATCC 10987 / NRS 248)).